The sequence spans 1277 residues: Protein FAM83H (1277 aa).

Polar residues predominate over residues 1–12 (MARRSQSSSQGE). Disordered regions lie at residues 1-20 (MARR…PNYL), 67-98 (SLQR…SGTY), 717-756 (FGST…TNPL), 772-805 (SKLE…TGRT), 971-1018 (EQTS…NSAF), 1070-1130 (KAEE…SRLS), 1158-1225 (QKNR…RDIL), and 1247-1266 (KKDE…AGKI). Basic and acidic residues predominate over residues 724–750 (SVEKAKENPPAEKEKEEGLLSRHDSFR). Composition is skewed to polar residues over residues 777–805 (HTST…TGRT), 971–982 (EQTSSTIQTIGN), 993–1015 (SGPT…TRPN), and 1112–1130 (KSLS…SRLS). A compositionally biased stretch (low complexity) spans 1204-1215 (SFLSRSRFSRPS). Residues 1247 to 1263 (KKDEQPSHADDNDDKKA) show a composition bias toward basic and acidic residues.

This sequence belongs to the FAM83 family.

It localises to the cytoplasm. The protein localises to the cytoskeleton. May play a role in keratin cytoskeleton disassembly. In Xenopus tropicalis (Western clawed frog), this protein is Protein FAM83H.